Reading from the N-terminus, the 160-residue chain is MSTSVDYIEMKIPAEPEYVGIVRLTLSGVASRMGYTYDDIEDLKIAVSEACTNAVQHAYNDENKGEVSVRFGVFEDRLEVIVADQGDSFDFDQKQQDLGPYTPSHTVDQLSEGGLGLYLMETLMDEVKVQSNSGVTVAMTKYLNGERVDHGTTIKNYETN.

It belongs to the anti-sigma-factor family.

The catalysed reaction is L-seryl-[protein] + ATP = O-phospho-L-seryl-[protein] + ADP + H(+). It catalyses the reaction L-threonyl-[protein] + ATP = O-phospho-L-threonyl-[protein] + ADP + H(+). In terms of biological role, negative regulator of sigma-B activity. Phosphorylates and inactivates its specific antagonist protein, RsbV. Upon phosphorylation of RsbV, RsbW is released and binds to sigma-B, thereby blocking its ability to form an RNA polymerase holoenzyme (E-sigma-B). This Bacillus velezensis (strain DSM 23117 / BGSC 10A6 / LMG 26770 / FZB42) (Bacillus amyloliquefaciens subsp. plantarum) protein is Serine-protein kinase RsbW.